The following is a 427-amino-acid chain: Gamma-glutamyl phosphate reductase (427 aa).

This sequence belongs to the gamma-glutamyl phosphate reductase family.

Its subcellular location is the cytoplasm. The enzyme catalyses L-glutamate 5-semialdehyde + phosphate + NADP(+) = L-glutamyl 5-phosphate + NADPH + H(+). It functions in the pathway amino-acid biosynthesis; L-proline biosynthesis; L-glutamate 5-semialdehyde from L-glutamate: step 2/2. Catalyzes the NADPH-dependent reduction of L-glutamate 5-phosphate into L-glutamate 5-semialdehyde and phosphate. The product spontaneously undergoes cyclization to form 1-pyrroline-5-carboxylate. The polypeptide is Gamma-glutamyl phosphate reductase (Brucella canis (strain ATCC 23365 / NCTC 10854 / RM-666)).